The primary structure comprises 482 residues: tRNA sulfurtransferase (482 aa).

The THUMP domain occupies L61–R165. Residues L183–I184, K265, G287, and Q296 contribute to the ATP site. C344 and C456 form a disulfide bridge. In terms of domain architecture, Rhodanese spans F404–P482. C456 (cysteine persulfide intermediate) is an active-site residue.

Belongs to the ThiI family.

The protein resides in the cytoplasm. It catalyses the reaction [ThiI sulfur-carrier protein]-S-sulfanyl-L-cysteine + a uridine in tRNA + 2 reduced [2Fe-2S]-[ferredoxin] + ATP + H(+) = [ThiI sulfur-carrier protein]-L-cysteine + a 4-thiouridine in tRNA + 2 oxidized [2Fe-2S]-[ferredoxin] + AMP + diphosphate. The catalysed reaction is [ThiS sulfur-carrier protein]-C-terminal Gly-Gly-AMP + S-sulfanyl-L-cysteinyl-[cysteine desulfurase] + AH2 = [ThiS sulfur-carrier protein]-C-terminal-Gly-aminoethanethioate + L-cysteinyl-[cysteine desulfurase] + A + AMP + 2 H(+). The protein operates within cofactor biosynthesis; thiamine diphosphate biosynthesis. In terms of biological role, catalyzes the ATP-dependent transfer of a sulfur to tRNA to produce 4-thiouridine in position 8 of tRNAs, which functions as a near-UV photosensor. Also catalyzes the transfer of sulfur to the sulfur carrier protein ThiS, forming ThiS-thiocarboxylate. This is a step in the synthesis of thiazole, in the thiamine biosynthesis pathway. The sulfur is donated as persulfide by IscS. The sequence is that of tRNA sulfurtransferase from Escherichia coli O9:H4 (strain HS).